The sequence spans 311 residues: MNKNKPFIVVIVGPTASGKTELSIELAKRINGEIISGDSMQVYKHMNIGTAKVTPEEMDGIPHHLIDILNPDDTFSAYEFKRLAEDLITDITNRGKVPIIAGGTGLYIQSLIYNYELEDETVTSAQLSVVKQKLSALEHLDNQQLHDYLAQFDEASAKNIHPNNRQRVLRAIEYYFKTKKLLSNRKKVQQFTENYDTLLIGIEMSRKTLYSRINKRVDIMLDHGLFREVQQLVEQGYESCRSMQAIGYKELIPVINGQMIYEDAVNDLKQHSRQYAKRQMTWFKNKMSVHWLDKENMSLQMMLDEITTQIK.

13–20 contacts ATP; it reads GPTASGKT. 15 to 20 serves as a coordination point for substrate; the sequence is TASGKT. 2 interaction with substrate tRNA regions span residues 38–41 and 166–170; these read DSMQ and QRVLR.

This sequence belongs to the IPP transferase family. In terms of assembly, monomer. The cofactor is Mg(2+).

It carries out the reaction adenosine(37) in tRNA + dimethylallyl diphosphate = N(6)-dimethylallyladenosine(37) in tRNA + diphosphate. In terms of biological role, catalyzes the transfer of a dimethylallyl group onto the adenine at position 37 in tRNAs that read codons beginning with uridine, leading to the formation of N6-(dimethylallyl)adenosine (i(6)A). The chain is tRNA dimethylallyltransferase from Staphylococcus aureus (strain bovine RF122 / ET3-1).